We begin with the raw amino-acid sequence, 629 residues long: Endoglucanase 15 (629 aa).

A signal peptide spans 1–30; that stretch reads MAKNGGAHGAATLFGLLALASMVKLGFVAG. The active-site Nucleophile is the Asp-87. Catalysis depends on residues His-421, Asp-473, and Glu-482. N-linked (GlcNAc...) asparagine glycosylation is found at Asn-520, Asn-540, and Asn-561.

Belongs to the glycosyl hydrolase 9 (cellulase E) family.

The protein localises to the secreted. It catalyses the reaction Endohydrolysis of (1-&gt;4)-beta-D-glucosidic linkages in cellulose, lichenin and cereal beta-D-glucans.. The chain is Endoglucanase 15 from Oryza sativa subsp. japonica (Rice).